A 155-amino-acid chain; its full sequence is Ribosomal RNA large subunit methyltransferase H (155 aa).

S-adenosyl-L-methionine is bound by residues L72, G103, and 122-127; that span reads LSPLTL.

The protein belongs to the RNA methyltransferase RlmH family. As to quaternary structure, homodimer.

Its subcellular location is the cytoplasm. The catalysed reaction is pseudouridine(1915) in 23S rRNA + S-adenosyl-L-methionine = N(3)-methylpseudouridine(1915) in 23S rRNA + S-adenosyl-L-homocysteine + H(+). Its function is as follows. Specifically methylates the pseudouridine at position 1915 (m3Psi1915) in 23S rRNA. The polypeptide is Ribosomal RNA large subunit methyltransferase H (Histophilus somni (strain 129Pt) (Haemophilus somnus)).